The primary structure comprises 281 residues: Diaminopimelate epimerase (281 aa).

Substrate is bound by residues Asn-13, Gln-46, and Asn-66. The active-site Proton donor is Cys-75. Residues 76-77 (GN), Asn-160, Asn-193, and 211-212 (ER) contribute to the substrate site. The Proton acceptor role is filled by Cys-220. Position 221–222 (221–222 (GT)) interacts with substrate.

It belongs to the diaminopimelate epimerase family. Homodimer.

Its subcellular location is the cytoplasm. It carries out the reaction (2S,6S)-2,6-diaminopimelate = meso-2,6-diaminopimelate. It participates in amino-acid biosynthesis; L-lysine biosynthesis via DAP pathway; DL-2,6-diaminopimelate from LL-2,6-diaminopimelate: step 1/1. Functionally, catalyzes the stereoinversion of LL-2,6-diaminopimelate (L,L-DAP) to meso-diaminopimelate (meso-DAP), a precursor of L-lysine and an essential component of the bacterial peptidoglycan. This Acinetobacter baumannii (strain AB307-0294) protein is Diaminopimelate epimerase.